Reading from the N-terminus, the 408-residue chain is UDP-glucose 4-epimerase 2 (408 aa).

Position 13–44 (13–44 (TVLVTGGAGYIGSHAVLQLLLAGFRAVVVDNL)) interacts with NAD(+). Position 138 (S138) interacts with substrate. Y162 functions as the Proton acceptor in the catalytic mechanism. Positions 369–408 (GSPKQNGHCTNGFSESTRHNGHNGYGLVDSAKHNGNGHFH) are disordered. The segment covering 370-383 (SPKQNGHCTNGFSE) has biased composition (polar residues).

The protein belongs to the NAD(P)-dependent epimerase/dehydratase family. NAD(+) serves as cofactor.

The enzyme catalyses UDP-alpha-D-glucose = UDP-alpha-D-galactose. It functions in the pathway carbohydrate metabolism; galactose metabolism. Functionally, catalyzes the interconversion between UDP-glucose and UDP-galactose. The sequence is that of UDP-glucose 4-epimerase 2 (UGE-2) from Oryza sativa subsp. japonica (Rice).